Consider the following 438-residue polypeptide: Na(+)/H(+) antiporter NhaA (438 aa).

11 helical membrane-spanning segments follow: residues phenylalanine 23–leucine 43, phenylalanine 62–leucine 82, serine 104–leucine 124, glycine 133–glycine 153, valine 162–phenylalanine 182, threonine 185–leucine 205, serine 212–isoleucine 232, phenylalanine 302–valine 322, leucine 337–isoleucine 357, tryptophan 372–isoleucine 392, and isoleucine 410–leucine 430.

The protein belongs to the NhaA Na(+)/H(+) (TC 2.A.33) antiporter family.

Its subcellular location is the cell inner membrane. The catalysed reaction is Na(+)(in) + 2 H(+)(out) = Na(+)(out) + 2 H(+)(in). Its function is as follows. Na(+)/H(+) antiporter that extrudes sodium in exchange for external protons. The polypeptide is Na(+)/H(+) antiporter NhaA (Helicobacter pylori (strain J99 / ATCC 700824) (Campylobacter pylori J99)).